The following is a 127-amino-acid chain: Large ribosomal subunit protein bL12 (127 aa).

The protein belongs to the bacterial ribosomal protein bL12 family. As to quaternary structure, homodimer. Part of the ribosomal stalk of the 50S ribosomal subunit. Forms a multimeric L10(L12)X complex, where L10 forms an elongated spine to which 2 to 4 L12 dimers bind in a sequential fashion. Binds GTP-bound translation factors.

Its function is as follows. Forms part of the ribosomal stalk which helps the ribosome interact with GTP-bound translation factors. Is thus essential for accurate translation. The sequence is that of Large ribosomal subunit protein bL12 from Phytoplasma mali (strain AT).